Reading from the N-terminus, the 136-residue chain is Peptide deformylase (136 aa).

Cys-85 and His-126 together coordinate Fe cation. Glu-127 is a catalytic residue. His-130 provides a ligand contact to Fe cation.

Belongs to the polypeptide deformylase family. The cofactor is Fe(2+).

The catalysed reaction is N-terminal N-formyl-L-methionyl-[peptide] + H2O = N-terminal L-methionyl-[peptide] + formate. Its function is as follows. Removes the formyl group from the N-terminal Met of newly synthesized proteins. Requires at least a dipeptide for an efficient rate of reaction. N-terminal L-methionine is a prerequisite for activity but the enzyme has broad specificity at other positions. The polypeptide is Peptide deformylase (Clostridium beijerinckii (strain ATCC 51743 / NCIMB 8052) (Clostridium acetobutylicum)).